A 389-amino-acid polypeptide reads, in one-letter code: S-adenosylmethionine synthase (389 aa).

An ATP-binding site is contributed by His15. Asp17 is a Mg(2+) binding site. Glu43 lines the K(+) pocket. Residues Glu56 and Gln99 each contribute to the L-methionine site. The interval 99–109 is flexible loop; the sequence is QSPDIAQGVNE. ATP-binding positions include 166–168, 234–235, Asp243, 249–250, Ala266, and Lys270; these read DAK, RF, and RK. Asp243 is a binding site for L-methionine. Lys274 provides a ligand contact to L-methionine.

The protein belongs to the AdoMet synthase family. As to quaternary structure, homotetramer; dimer of dimers. Mg(2+) is required as a cofactor. Requires K(+) as cofactor.

Its subcellular location is the cytoplasm. It carries out the reaction L-methionine + ATP + H2O = S-adenosyl-L-methionine + phosphate + diphosphate. The protein operates within amino-acid biosynthesis; S-adenosyl-L-methionine biosynthesis; S-adenosyl-L-methionine from L-methionine: step 1/1. Catalyzes the formation of S-adenosylmethionine (AdoMet) from methionine and ATP. The overall synthetic reaction is composed of two sequential steps, AdoMet formation and the subsequent tripolyphosphate hydrolysis which occurs prior to release of AdoMet from the enzyme. This chain is S-adenosylmethionine synthase, found in Neisseria gonorrhoeae (strain ATCC 700825 / FA 1090).